The sequence spans 134 residues: Translation initiation factor 2 subunit beta (134 aa).

Residues 1–12 (MEYDDMLDRAME) show a composition bias toward basic and acidic residues. Residues 1-28 (MEYDDMLDRAMEETPEIDGTSERFEVPD) are disordered.

The protein belongs to the eIF-2-beta/eIF-5 family. In terms of assembly, heterotrimer composed of an alpha, a beta and a gamma chain.

EIF-2 functions in the early steps of protein synthesis by forming a ternary complex with GTP and initiator tRNA. The protein is Translation initiation factor 2 subunit beta of Haloarcula marismortui (strain ATCC 43049 / DSM 3752 / JCM 8966 / VKM B-1809) (Halobacterium marismortui).